A 167-amino-acid polypeptide reads, in one-letter code: NADH-ubiquinone oxidoreductase chain 4 (167 aa).

Transmembrane regions (helical) follow at residues 2 to 22 (FIGATTLMIAHGLTSSLLFCL), 44 to 64 (LLPLAATWWLLASLTNLALPP), and 86 to 106 (IILVGLNTLITALYSLYMLIM).

The protein belongs to the complex I subunit 4 family.

The protein resides in the mitochondrion membrane. It carries out the reaction a ubiquinone + NADH + 5 H(+)(in) = a ubiquinol + NAD(+) + 4 H(+)(out). Core subunit of the mitochondrial membrane respiratory chain NADH dehydrogenase (Complex I) that is believed to belong to the minimal assembly required for catalysis. Complex I functions in the transfer of electrons from NADH to the respiratory chain. The immediate electron acceptor for the enzyme is believed to be ubiquinone. The protein is NADH-ubiquinone oxidoreductase chain 4 (MT-ND4) of Carlito syrichta (Philippine tarsier).